Reading from the N-terminus, the 118-residue chain is UPF0102 protein Francci3_3586 (118 aa).

Belongs to the UPF0102 family.

This Frankia casuarinae (strain DSM 45818 / CECT 9043 / HFP020203 / CcI3) protein is UPF0102 protein Francci3_3586.